The chain runs to 214 residues: MILILLGPPGAGKGTQAKLLSSELGIPHISTGDMFRDHKARGTEIGKQVQAIMDAGGLVTDDITNAMVKERLSRPDVAPGFILDGYPRTVVQAGYLDGLLRSLGRSIDRALSYEVPEELVVERISGRRSCPRCGAVYHVSQNPPHRAGFCDRDDTALVQREDDKPENVRKRMQEYGTKTEPLKRYYRDRGELSDVEGVGTPEGILAVTKKVLGR.

ATP is bound at residue 10–15 (GAGKGT). The segment at 30 to 59 (STGDMFRDHKARGTEIGKQVQAIMDAGGLV) is NMP. AMP is bound by residues Thr-31, Arg-36, 57–59 (GLV), 85–88 (GYPR), and Gln-92. The segment at 126–163 (GRRSCPRCGAVYHVSQNPPHRAGFCDRDDTALVQREDD) is LID. Arg-127 provides a ligand contact to ATP. Zn(2+) contacts are provided by Cys-130 and Cys-133. ATP is bound at residue 136 to 137 (VY). Positions 150 and 153 each coordinate Zn(2+). Residues Arg-160 and Arg-171 each coordinate AMP. Gly-199 contributes to the ATP binding site.

Belongs to the adenylate kinase family. As to quaternary structure, monomer.

Its subcellular location is the cytoplasm. The enzyme catalyses AMP + ATP = 2 ADP. The protein operates within purine metabolism; AMP biosynthesis via salvage pathway; AMP from ADP: step 1/1. Functionally, catalyzes the reversible transfer of the terminal phosphate group between ATP and AMP. Plays an important role in cellular energy homeostasis and in adenine nucleotide metabolism. The protein is Adenylate kinase of Anaeromyxobacter sp. (strain K).